The sequence spans 461 residues: Cysteine--tRNA ligase (461 aa).

C28 provides a ligand contact to Zn(2+). A 'HIGH' region motif is present at residues 30–40 (ITVYDLCHIGH). Zn(2+) contacts are provided by C209, H234, and E238. Residues 266 to 270 (KMSKS) carry the 'KMSKS' region motif. K269 is an ATP binding site.

This sequence belongs to the class-I aminoacyl-tRNA synthetase family. In terms of assembly, monomer. It depends on Zn(2+) as a cofactor.

The protein localises to the cytoplasm. It catalyses the reaction tRNA(Cys) + L-cysteine + ATP = L-cysteinyl-tRNA(Cys) + AMP + diphosphate. The chain is Cysteine--tRNA ligase from Escherichia coli (strain SMS-3-5 / SECEC).